We begin with the raw amino-acid sequence, 892 residues long: Alpha-actinin-1 (892 aa).

The residue at position 1 (Met1) is an N-acetylmethionine. The interval 1–247 (MDHYDSQQTN…IMTYVSSFYH (247 aa)) is actin-binding. Position 6 is a phosphoserine (Ser6). Position 12 is a phosphotyrosine; by FAK1 (Tyr12). Calponin-homology (CH) domains lie at 31-135 (KQQR…LRFA) and 144-250 (TSAK…HAFS). N6-acetyllysine occurs at positions 95 and 195. 4 Spectrin repeats span residues 274–384 (QLME…WLLN), 394–499 (HLAE…ALER), 509–620 (QLYL…ALTE), and 630–733 (RLRK…EVEN). Positions 274 to 733 (QLMEDYEKLA…IARTINEVEN (460 aa)) are interaction with DDN. Ser471 bears the Phosphoserine mark. The residue at position 676 (Lys676) is an N6-acetyllysine. Phosphoserine is present on Ser677. EF-hand domains are found at residues 746–781 (EQMN…LGYD) and 787–822 (QGEA…ETAD). Ca(2+)-binding residues include Asp759, Asp761, Ser763, Thr765, and Glu770. The residue at position 890 (Ser890) is a Phosphoserine.

This sequence belongs to the alpha-actinin family. In terms of assembly, homodimer; antiparallel. Interacts with MYOZ2, TTID and LPP. Interacts with DDN. Interacts with PSD. Interacts with MICALL2. Interacts with DNM2 and CTTN. Interacts with PDLIM1. Interacts with PDLIM2. Interacts with PDLIM4 (via PDZ domain). Interacts with IGSF8.

It localises to the cytoplasm. The protein localises to the cytoskeleton. It is found in the myofibril. The protein resides in the sarcomere. Its subcellular location is the z line. It localises to the cell membrane. The protein localises to the cell junction. It is found in the cell projection. The protein resides in the ruffle. Functionally, F-actin cross-linking protein which is thought to anchor actin to a variety of intracellular structures. Association with IGSF8 regulates the immune synapse formation and is required for efficient T-cell activation. This Bos taurus (Bovine) protein is Alpha-actinin-1 (ACTN1).